Reading from the N-terminus, the 882-residue chain is MKQLTSSQVRQMFLDFFKEHGHMVMPSASLIPQDDPTLLWINSGVATMKKYFDGSVVPKNHRITSSQKSIRTNDIENVGKTARHQTFFEMLGNFSVGDYFKKEVIPWAWEFLTSPKWLGLDPDKLYVTVYPKDTEAYHMWHDVVGLPEDHIVKLEDNFWDIGEGPCGPDSEIFYDRGQENNDVAEDDPENFPGGENARYLEIWNIVFSQFNHLPNGKYVDQPHKNIDTGMGLERVVSIIQDAPTNFETDLFMPIIKETEKLSDGKKYAANKEDDVAFKIIADHVRAVSFAIADGALPSNSGRGYVLRRLIRRADLNGQRLGIKGAFLYKLVPVVGEIMKSHYPEVVDQQAFIQKVIKNEEERFQVTLSSGLNLLDNIIAEAKKSDDKTVSGKDAFKLFDTYGFPYELTFEAAQDAGLKVDKKGFDEEMKAQKERARKARGNLQSMGSQDVTLMNIKDKSEFEYGTLEEKHAKLIDIVVNDKLVDKADGEHATLIFDKTPFYAERGGQVADHGEILNQNGELVARVTDVQHAPNDQNLHFVDIILPLEKGQEYILKVDQKRRRGLKHNHTATHLLHAALREVLGTHTHQAGSLVEPDYLRFDFTSLEPMTKKEIANVEKIVNEKIWEEIPVKTTVTDPDTGLKMGALALFGEKYGDTVRVVQIDDFSTEFCGGTHCENTDQIGMLKIVSESAVGAGTRRIIAVTGPEAYKYVTDRDEILKEVQDEVKATKAEDVTNKISSLEEDLRASQKEAEQLKAQINKAKAGDLFNDVKQVKGLTVIAAQADVEGMNDLRELADNWKSSDKSDVLVLAAEVNGKANMVISLNDKAIKAGLKAGDLIKTAAPIFGGGGGGRPNMAQAGGKNPAGLKDAIAKVLQEVEEKQN.

Zn(2+)-binding residues include H568, H572, C670, and H674.

Belongs to the class-II aminoacyl-tRNA synthetase family. Requires Zn(2+) as cofactor.

The protein resides in the cytoplasm. It catalyses the reaction tRNA(Ala) + L-alanine + ATP = L-alanyl-tRNA(Ala) + AMP + diphosphate. Functionally, catalyzes the attachment of alanine to tRNA(Ala) in a two-step reaction: alanine is first activated by ATP to form Ala-AMP and then transferred to the acceptor end of tRNA(Ala). Also edits incorrectly charged Ser-tRNA(Ala) and Gly-tRNA(Ala) via its editing domain. The chain is Alanine--tRNA ligase from Lactobacillus gasseri (strain ATCC 33323 / DSM 20243 / BCRC 14619 / CIP 102991 / JCM 1131 / KCTC 3163 / NCIMB 11718 / NCTC 13722 / AM63).